Consider the following 237-residue polypeptide: Early nodulin-like protein 1 (237 aa).

Residues 1–28 (MEASRRWPYAAWFMAVLGLVAVFSSSEA) form the signal peptide. The region spanning 29–134 (YVFYAGGRDG…GQKLYIIVMA (106 aa)) is the Phytocyanin domain. The N-linked (GlcNAc...) asparagine glycan is linked to asparagine 59. A disulfide bond links cysteine 85 and cysteine 122. The segment at 139-215 (KPSEAPEPAG…SLGAPPPTSG (77 aa)) is disordered. 2 stretches are compositionally biased toward low complexity: residues 140–152 (PSEA…AAGP) and 201–215 (MSRS…PTSG). The GPI-anchor amidated serine moiety is linked to residue serine 206. A propeptide spans 207–237 (LGAPPPTSGAAGLAGVVASVVVGVLGALLMF) (removed in mature form).

It belongs to the early nodulin-like (ENODL) family. In terms of tissue distribution, expressed ubiquitously. Accumulates particularly in reproductive tissues, especially in maturing seeds.

The protein resides in the vacuole. It is found in the aleurone grain membrane. May act as a carbohydrate transporter. The polypeptide is Early nodulin-like protein 1 (Oryza sativa subsp. japonica (Rice)).